An 800-amino-acid polypeptide reads, in one-letter code: Chondroitin sulfate synthase 1 (800 aa).

The Cytoplasmic portion of the chain corresponds to 1 to 7; it reads MAARGRR. Residues 8 to 28 form a helical; Signal-anchor for type II membrane protein membrane-spanning segment; the sequence is AWLSMLLGLVLGFVLASRLVL. Residues 29–800 are Lumenal-facing; sequence PRASELKRVG…GGSHGSARTA (772 aa). Residues 36–66 form a disordered region; it reads RVGPRRRPSPEGCRPGQEASQPGGARGDARG. 2 N-linked (GlcNAc...) asparagine glycosylation sites follow: asparagine 188 and asparagine 622. Residues aspartate 632 and histidine 746 each coordinate a divalent metal cation.

It belongs to the chondroitin N-acetylgalactosaminyltransferase family. It depends on Co(2+) as a cofactor. Mn(2+) serves as cofactor. The cofactor is Cd(2+).

It localises to the golgi apparatus. It is found in the golgi stack membrane. Its subcellular location is the secreted. It catalyses the reaction 3-O-(beta-D-GlcA-(1-&gt;3)-beta-D-GalNAc-(1-&gt;4)-beta-D-GlcA-(1-&gt;3)-beta-D-Gal-(1-&gt;3)-beta-D-Gal-(1-&gt;4)-beta-D-Xyl)-L-seryl-[protein] + UDP-N-acetyl-alpha-D-galactosamine = 3-O-(beta-D-GalNAc-(1-&gt;4)-beta-D-GlcA-(1-&gt;3)-beta-D-GalNAc-(1-&gt;4)-beta-D-GlcA-(1-&gt;3)-beta-D-Gal-(1-&gt;3)-beta-D-Gal-(1-&gt;4)-beta-D-Xyl)-L-seryl-[protein] + UDP + H(+). The enzyme catalyses 3-O-{beta-D-GlcA-(1-&gt;3)-[beta-D-GalNAc-(1-&gt;4)-beta-D-GlcA-(1-&gt;3)](n)-beta-D-GalNAc-(1-&gt;4)-beta-D-GlcA-(1-&gt;3)-beta-D-Gal-(1-&gt;3)-beta-D-Gal-(1-&gt;4)-beta-D-Xyl}-L-seryl-[protein] + UDP-N-acetyl-alpha-D-galactosamine = 3-O-{[beta-D-GalNAc-(1-&gt;4)-beta-D-GlcA-(1-&gt;3)](n+1)-beta-D-GalNAc-(1-&gt;4)-beta-D-GlcA-(1-&gt;3)-beta-D-Gal-(1-&gt;3)-beta-D-Gal-(1-&gt;4)-beta-D-Xyl}-L-seryl-[protein] + UDP + H(+). The catalysed reaction is 3-O-(beta-D-GalNAc-(1-&gt;4)-beta-D-GlcA-(1-&gt;3)-beta-D-Gal-(1-&gt;3)-beta-D-Gal-(1-&gt;4)-beta-D-Xyl)-L-seryl-[protein] + UDP-alpha-D-glucuronate = 3-O-(beta-D-GlcA-(1-&gt;3)-beta-D-GalNAc-(1-&gt;4)-beta-D-GlcA-(1-&gt;3)-beta-D-Gal-(1-&gt;3)-beta-D-Gal-(1-&gt;4)-beta-D-Xyl)-L-seryl-[protein] + UDP + H(+). It carries out the reaction 3-O-{[beta-D-GalNAc-(1-&gt;4)-beta-D-GlcA-(1-&gt;3)](n)-beta-D-GalNAc-(1-&gt;4)-beta-D-GlcA-(1-&gt;3)-beta-D-Gal-(1-&gt;3)-beta-D-Gal-(1-&gt;4)-beta-D-Xyl}-L-seryl-[protein] + UDP-alpha-D-glucuronate = 3-O-{beta-D-GlcA-(1-&gt;3)-[beta-D-GalNAc-(1-&gt;4)-beta-D-GlcA-(1-&gt;3)](n)-beta-D-GalNAc-(1-&gt;4)-beta-D-GlcA-(1-&gt;3)-beta-D-Gal-(1-&gt;3)-beta-D-Gal-(1-&gt;4)-beta-D-Xyl}-L-seryl-[protein] + UDP + H(+). Its function is as follows. Has both beta-1,3-glucuronic acid and beta-1,4-N-acetylgalactosamine transferase activity. Transfers glucuronic acid (GlcUA) from UDP-GlcUA and N-acetylgalactosamine (GalNAc) from UDP-GalNAc to the non-reducing end of the elongating chondroitin polymer. Involved in the negative control of osteogenesis likely through the modulation of NOTCH signaling. This Mus musculus (Mouse) protein is Chondroitin sulfate synthase 1 (Chsy1).